Reading from the N-terminus, the 755-residue chain is MGPTACVLVLALAILRATGQGQIPLGGDLAPQMLRELQETNAALQDVRELLRQQVKEITFLKNTVMECDACGMQPARTPGLSVRPVPLCAPGSCFPGVVCSETATGARCGPCPPGYTGNGSHCTDVNECNAHPCFPRVRCINTSPGFHCEACPPGFSGPTHEGVGLTFAKSNKQVCTDINECETGQHNCVPNSVCVNTRGSFQCGPCQPGFVGDQTSGCQRRGQHFCPDGSPSPCHEKANCVLERDGSRSCVCAVGWAGNGLLCGRDTDLDGFPDEKLRCSERQCRKDNCVTVPNSGQEDVDRDGIGDACDPDADGDGVPNEQDNCPLVRNPDQRNSDSDKWGDACDNCRSKKNDDQKDTDLDGRGDACDDDIDGDRIRNVADNCPRVPNFDQSDSDGDGVGDACDNCPQKDNPDQRDVDHDFVGDACDSDQDQDGDGHQDSRDNCPTVPNSAQQDSDHDGKGDACDDDDDNDGVPDSRDNCRLVPNPGQEDNDRDGVGDACQGDFDADKVIDKIDVCPENAEVTLTDFRAFQTVVLDPEGDAQIDPNWVVLNQGMEIVQTMNSDPGLAVGYTAFNGVDFEGTFHVNTATDDDYAGFIFGYQDSSSFYVVMWKQMEQTYWQANPFRAVAEPGIQLKAVKSSTGPGEQLRNALWHTGDTASQVRLLWKDPRNVGWKDKTSYRWFLQHRPQVGYIRVRFYEGPELVADSNVVLDTAMRGGRLGVFCFSQENIIWANLRYRCNDTIPEDYESHRLQRV.

A signal peptide spans 1-19; it reads MGPTACVLVLALAILRATG. A COMP N-terminal region spans residues 21-84; that stretch reads GQIPLGGDLA…PARTPGLSVR (64 aa). Residues 85–124 form the EGF-like 1 domain; sequence PVPLCAPGSCFPGVVCSETATGARCGPCPPGYTGNGSHCT. 21 disulfide bridges follow: cysteine 89-cysteine 100, cysteine 94-cysteine 109, cysteine 112-cysteine 123, cysteine 129-cysteine 140, cysteine 134-cysteine 149, cysteine 152-cysteine 176, cysteine 182-cysteine 195, cysteine 189-cysteine 204, cysteine 207-cysteine 219, cysteine 227-cysteine 241, cysteine 235-cysteine 251, cysteine 253-cysteine 264, cysteine 280-cysteine 285, cysteine 290-cysteine 310, cysteine 326-cysteine 346, cysteine 349-cysteine 369, cysteine 385-cysteine 405, cysteine 408-cysteine 428, cysteine 446-cysteine 466, cysteine 482-cysteine 502, and cysteine 518-cysteine 739. Asparagine 119 carries N-linked (GlcNAc...) asparagine glycosylation. Residues 125–177 enclose the EGF-like 2; calcium-binding domain; that stretch reads DVNECNAHPCFPRVRCINTSPGFHCEACPPGFSGPTHEGVGLTFAKSNKQVCT. Residues 178–220 enclose the EGF-like 3; calcium-binding domain; it reads DINECETGQHNCVPNSVCVNTRGSFQCGPCQPGFVGDQTSGCQ. Residues 223–265 form the EGF-like 4 domain; the sequence is GQHFCPDGSPSPCHEKANCVLERDGSRSCVCAVGWAGNGLLCG. TSP type-3 repeat units follow at residues 266–298, 299–334, 335–357, 358–393, 394–416, 417–454, 455–490, and 491–526; these read RDTD…NSGQ, EDVD…NPDQ, RNSD…NDDQ, KDTD…NFDQ, SDSD…NPDQ, RDVD…NSAQ, QDSD…NPGQ, and EDND…EVTL. 2 disordered regions span residues 296–341 and 353–501; these read SGQE…DSDK and KNDD…VGDA. Composition is skewed to basic and acidic residues over residues 332–341 and 353–368; these read PDQRNSDSDK and KNDD…RGDA. Residue serine 394 is modified to Phosphoserine. 2 stretches are compositionally biased toward basic and acidic residues: residues 412-424 and 456-465; these read DNPD…HDFV and DSDHDGKGDA. A mediates cell survival and induction of the IAP family of survival proteins region spans residues 525–755; sequence TLTDFRAFQT…DYESHRLQRV (231 aa). One can recognise a TSP C-terminal domain in the interval 530–744; that stretch reads RAFQTVVLDP…LRYRCNDTIP (215 aa). The N-linked (GlcNAc...) asparagine glycan is linked to asparagine 740.

Belongs to the thrombospondin family. As to quaternary structure, pentamer; disulfide-linked. Exists in a more compact conformation in the presence of calcium and shows a more extended conformation in the absence of calcium. Interacts with ITGB3, ITGA5 and FN1. Binding to FN1 requires the presence of divalent cations (Ca(2+), Mg(2+) or Mn(2+)). The greatest amount of binding is seen in the presence of Mn(2+). Interacts with MATN1, MATN3, MATN4 and ACAN. Binds heparin, heparan sulfate and chondroitin sulfate. EDTA dimishes significantly its binding to ACAN and abolishes its binding to MATN3, MATN4 and chondroitin sulfate. Interacts with collagen I, II and IX, and interaction with these collagens is dependent on the presence of zinc ions. Interacts with ADAMTS12. Interacts with ITGA7. It depends on Ca(2+) as a cofactor. Post-translationally, proteolytically cleaved by metalloproteases ADAMTS4 and ADAMTS1 with ADAMTS4 showing more potent activity. As to expression, expressed in cartilage, including nasal, knee epiphyseal and rib tissues. Abundantly expressed in chondrocyte and tendon extracellular matrix (at protein level).

Its subcellular location is the secreted. The protein localises to the extracellular space. The protein resides in the extracellular matrix. Plays a role in the structural integrity of cartilage via its interaction with other extracellular matrix proteins such as the collagens and fibronectin. Can mediate the interaction of chondrocytes with the cartilage extracellular matrix through interaction with cell surface integrin receptors. Could play a role in the pathogenesis of osteoarthritis. Potent suppressor of apoptosis in both primary chondrocytes and transformed cells. Suppresses apoptosis by blocking the activation of caspase-3 and by inducing the IAP family of survival proteins (BIRC3, BIRC2, BIRC5 and XIAP). Essential for maintaining a vascular smooth muscle cells (VSMCs) contractile/differentiated phenotype under physiological and pathological stimuli. Maintains this phenotype of VSMCs by interacting with ITGA7. In Mus musculus (Mouse), this protein is Cartilage oligomeric matrix protein.